The chain runs to 649 residues: Acetyl-coenzyme A synthetase (649 aa).

CoA contacts are provided by residues 189–192 (RGGK), Thr-311, and Asn-335. ATP contacts are provided by residues 387 to 389 (GEP), 411 to 416 (DTWWQT), Asp-500, and Arg-515. Ser-523 is a CoA binding site. Position 526 (Arg-526) interacts with ATP. Val-537, His-539, and Val-542 together coordinate Mg(2+). Arg-584 provides a ligand contact to CoA. Lys-609 is modified (N6-acetyllysine).

It belongs to the ATP-dependent AMP-binding enzyme family. It depends on Mg(2+) as a cofactor. Acetylated. Deacetylation by the SIR2-homolog deacetylase activates the enzyme.

The catalysed reaction is acetate + ATP + CoA = acetyl-CoA + AMP + diphosphate. In terms of biological role, catalyzes the conversion of acetate into acetyl-CoA (AcCoA), an essential intermediate at the junction of anabolic and catabolic pathways. AcsA undergoes a two-step reaction. In the first half reaction, AcsA combines acetate with ATP to form acetyl-adenylate (AcAMP) intermediate. In the second half reaction, it can then transfer the acetyl group from AcAMP to the sulfhydryl group of CoA, forming the product AcCoA. The chain is Acetyl-coenzyme A synthetase from Sinorhizobium medicae (strain WSM419) (Ensifer medicae).